Consider the following 88-residue polypeptide: Small ribosomal subunit protein uS15 (88 aa).

It belongs to the universal ribosomal protein uS15 family. In terms of assembly, part of the 30S ribosomal subunit. Forms a bridge to the 50S subunit in the 70S ribosome, contacting the 23S rRNA.

Its function is as follows. One of the primary rRNA binding proteins, it binds directly to 16S rRNA where it helps nucleate assembly of the platform of the 30S subunit by binding and bridging several RNA helices of the 16S rRNA. Forms an intersubunit bridge (bridge B4) with the 23S rRNA of the 50S subunit in the ribosome. This chain is Small ribosomal subunit protein uS15, found in Mycoplasma capricolum subsp. capricolum (strain California kid / ATCC 27343 / NCTC 10154).